The following is a 215-amino-acid chain: Small ribosomal subunit protein bS6 (215 aa).

2 disordered regions span residues 121 to 153 (RENN…QKPK) and 187 to 215 (NQRQ…KDKQ). Residues 144–153 (SRTEKAQKPK) are compositionally biased toward basic and acidic residues. The span at 188–198 (QRQNQQNNNNN) shows a compositional bias: low complexity. Residues 199 to 215 (RFDRNRNRQHNRFKDKQ) show a composition bias toward basic and acidic residues.

It belongs to the bacterial ribosomal protein bS6 family.

Binds together with bS18 to 16S ribosomal RNA. In Mycoplasma pneumoniae (strain ATCC 29342 / M129 / Subtype 1) (Mycoplasmoides pneumoniae), this protein is Small ribosomal subunit protein bS6 (rpsF).